Consider the following 448-residue polypeptide: Phosphoglucosamine mutase (448 aa).

Ser-99 serves as the catalytic Phosphoserine intermediate. Mg(2+)-binding residues include Ser-99, Asp-238, Asp-240, and Asp-242. Ser-99 is modified (phosphoserine).

This sequence belongs to the phosphohexose mutase family. Mg(2+) serves as cofactor. Activated by phosphorylation.

The catalysed reaction is alpha-D-glucosamine 1-phosphate = D-glucosamine 6-phosphate. Its function is as follows. Catalyzes the conversion of glucosamine-6-phosphate to glucosamine-1-phosphate. In Marinomonas sp. (strain MWYL1), this protein is Phosphoglucosamine mutase.